A 179-amino-acid polypeptide reads, in one-letter code: ATP synthase subunit delta (179 aa).

This sequence belongs to the ATPase delta chain family. F-type ATPases have 2 components, F(1) - the catalytic core - and F(0) - the membrane proton channel. F(1) has five subunits: alpha(3), beta(3), gamma(1), delta(1), epsilon(1). F(0) has three main subunits: a(1), b(2) and c(10-14). The alpha and beta chains form an alternating ring which encloses part of the gamma chain. F(1) is attached to F(0) by a central stalk formed by the gamma and epsilon chains, while a peripheral stalk is formed by the delta and b chains.

The protein localises to the cell membrane. Its function is as follows. F(1)F(0) ATP synthase produces ATP from ADP in the presence of a proton or sodium gradient. F-type ATPases consist of two structural domains, F(1) containing the extramembraneous catalytic core and F(0) containing the membrane proton channel, linked together by a central stalk and a peripheral stalk. During catalysis, ATP synthesis in the catalytic domain of F(1) is coupled via a rotary mechanism of the central stalk subunits to proton translocation. This protein is part of the stalk that links CF(0) to CF(1). It either transmits conformational changes from CF(0) to CF(1) or is implicated in proton conduction. This is ATP synthase subunit delta from Clostridium botulinum (strain ATCC 19397 / Type A).